The primary structure comprises 95 residues: MAHKKGTGSTRNGRDSNAQRLGVKRYGGERVKAGNILIRQRGTKIHPGANVGRGSDDTLFALIEGIVTFERLGRDRKKVSVYPLAQTAMQPVAAE.

A disordered region spans residues 1–25 (MAHKKGTGSTRNGRDSNAQRLGVKR). A compositionally biased stretch (polar residues) spans 7 to 19 (TGSTRNGRDSNAQ).

This sequence belongs to the bacterial ribosomal protein bL27 family.

In Gloeobacter violaceus (strain ATCC 29082 / PCC 7421), this protein is Large ribosomal subunit protein bL27.